Consider the following 133-residue polypeptide: Ribosome-binding factor A (133 aa).

This sequence belongs to the RbfA family. Monomer. Binds 30S ribosomal subunits, but not 50S ribosomal subunits or 70S ribosomes.

It is found in the cytoplasm. One of several proteins that assist in the late maturation steps of the functional core of the 30S ribosomal subunit. Associates with free 30S ribosomal subunits (but not with 30S subunits that are part of 70S ribosomes or polysomes). Required for efficient processing of 16S rRNA. May interact with the 5'-terminal helix region of 16S rRNA. The sequence is that of Ribosome-binding factor A from Klebsiella pneumoniae (strain 342).